Consider the following 127-residue polypeptide: Anti-adapter protein IraD (127 aa).

The protein belongs to the GpW/Gp25 family. IraD subfamily. As to quaternary structure, interacts with RssB.

The protein localises to the cytoplasm. Its function is as follows. Inhibits RpoS proteolysis by regulating RssB activity, thereby increasing the stability of the sigma stress factor RpoS during oxidative stress. Its effect on RpoS stability is due to its interaction with RssB, which probably blocks the interaction of RssB with RpoS, and the consequent delivery of the RssB-RpoS complex to the ClpXP protein degradation pathway. The chain is Anti-adapter protein IraD from Escherichia coli O6:H1 (strain CFT073 / ATCC 700928 / UPEC).